The primary structure comprises 564 residues: MFS-type transporter grgE (564 aa).

A compositionally biased stretch (basic and acidic residues) spans 1–10; the sequence is MAENQVDPKR. The tract at residues 1-52 is disordered; it reads MAENQVDPKRNLPLYGAADESTSATDKEDEVENVRQNGSAPPIEEARESNEA. Residue Asn37 is glycosylated (N-linked (GlcNAc...) asparagine). 7 helical membrane-spanning segments follow: residues 60–80, 101–118, 131–151, 161–181, 192–212, 220–240, and 262–282; these read HGLS…IISL, KVSW…GFQT, TTFL…GVAP, AIAG…IAFS, GLVG…GGAF, WCFY…LIFF, and LVGV…LQYG. The N-linked (GlcNAc...) asparagine glycan is linked to Asn289. 7 consecutive transmembrane segments (helical) span residues 293-313, 329-349, 368-388, 392-412, 425-445, 462-482, and 531-551; these read VIGL…WEYY, ALWA…ILLY, VRNL…GAFV, GIAT…TGLI, IGYQ…PMNI, IFLA…SAFV, and TFAI…FTPW.

The protein belongs to the major facilitator superfamily.

It is found in the membrane. In terms of biological role, MFS-type transporter; part of the gene cluster that mediates the biosynthesis of gregatin A, a fungal polyketide featuring an alkylated furanone core. The sequence is that of MFS-type transporter grgE from Penicillium sp.